The primary structure comprises 246 residues: Polyhedrin (246 aa).

The protein belongs to the polyhedrin family.

Functionally, major component of the virus occlusion bodies, which are large proteinaceous structures (polyhedra), that protect the virus from the outside environment for extended periods until they are ingested by insect larvae. The chain is Polyhedrin (PH) from Lepidoptera (butterflies and moths).